The chain runs to 647 residues: Exoribonuclease 2 (647 aa).

The 327-residue stretch at 191–517 (REDLCALPFV…VNHRLLKALI (327 aa)) folds into the RNB domain. The S1 motif domain maps to 563-645 (PTPFNAEIID…DTRSLIARPF (83 aa)).

It belongs to the RNR ribonuclease family. RNase II subfamily.

The protein localises to the cytoplasm. It catalyses the reaction Exonucleolytic cleavage in the 3'- to 5'-direction to yield nucleoside 5'-phosphates.. In terms of biological role, involved in mRNA degradation. Hydrolyzes single-stranded polyribonucleotides processively in the 3' to 5' direction. The polypeptide is Exoribonuclease 2 (Edwardsiella piscicida).